Here is a 453-residue protein sequence, read N- to C-terminus: CCA-adding enzyme (453 aa).

Residues S53 and K56 each coordinate ATP. Residues S53 and K56 each contribute to the CTP site. Residues D65, D67, and D119 each coordinate Mg(2+). ATP-binding residues include H142, K161, and Y170. Positions 142, 161, and 170 each coordinate CTP.

It belongs to the tRNA nucleotidyltransferase/poly(A) polymerase family. Archaeal CCA-adding enzyme subfamily. Homodimer. The cofactor is Mg(2+).

It carries out the reaction a tRNA precursor + 2 CTP + ATP = a tRNA with a 3' CCA end + 3 diphosphate. It catalyses the reaction a tRNA with a 3' CCA end + 2 CTP + ATP = a tRNA with a 3' CCACCA end + 3 diphosphate. Functionally, catalyzes the addition and repair of the essential 3'-terminal CCA sequence in tRNAs without using a nucleic acid template. Adds these three nucleotides in the order of C, C, and A to the tRNA nucleotide-73, using CTP and ATP as substrates and producing inorganic pyrophosphate. tRNA 3'-terminal CCA addition is required both for tRNA processing and repair. Also involved in tRNA surveillance by mediating tandem CCA addition to generate a CCACCA at the 3' terminus of unstable tRNAs. While stable tRNAs receive only 3'-terminal CCA, unstable tRNAs are marked with CCACCA and rapidly degraded. This Pyrococcus furiosus (strain ATCC 43587 / DSM 3638 / JCM 8422 / Vc1) protein is CCA-adding enzyme.